The following is a 295-amino-acid chain: MTGGMKPPARKPRILNSDGSSNITRLGLEKRGWLDDHYHDLLTVSWPVFITLITGLYLVTNALFALAYLACGDVIENARPGSFTDAFFFSVQTMATIGYGKLIPIGPLANTLVTLEALCGMLGLAVAASLIYARFTRPTAGVLFSSRMVISDFEGKPTLMMRLANLRIEQIIEADVHLVLVRSEISQEGMVFRRFHDLTLTRSRSPIFSLSWTVMHPIDHHSPIYGETDETLRNSHSEFLVLFTGHHEAFAQNVHARHAYSCDEIIWGGHFVDVFTTLPDGRRALDLGKFHEIAQ.

Residues 1-47 are Cytoplasmic-facing; it reads MTGGMKPPARKPRILNSDGSSNITRLGLEKRGWLDDHYHDLLTVSWP. Residues 48–69 traverse the membrane as a helical segment; sequence VFITLITGLYLVTNALFALAYL. Over 70–82 the chain is Extracellular; that stretch reads ACGDVIENARPGS. The segment at residues 83–95 is an intramembrane region (helical; Pore-forming); the sequence is FTDAFFFSVQTMA. Positions 96-100 match the Selectivity filter motif; sequence TIGYG. The helical transmembrane segment at 107–131 threads the bilayer; that stretch reads PLANTLVTLEALCGMLGLAVAASLI. Residues 132-295 are Cytoplasmic-facing; it reads YARFTRPTAG…DLGKFHEIAQ (164 aa).

The protein belongs to the inward rectifier-type potassium channel (TC 1.A.2.1) family. KCNJ11 subfamily. In terms of assembly, homotetramer.

Its subcellular location is the membrane. Inward rectifier potassium channel that mediates potassium uptake into the cell. Inward rectifier potassium channels are characterized by a greater tendency to allow potassium to flow into the cell rather than out of it. The inward rectification may be achieved by the blockage of outward current by cytoplasmic divalent metal ions and polyamines. Complements an E.coli mutant that is defective in K(+) uptake. In Paramagnetospirillum magnetotacticum (Aquaspirillum magnetotacticum), this protein is Inward rectifier potassium channel Kirbac3.1.